Here is a 910-residue protein sequence, read N- to C-terminus: DNA mismatch repair protein MutS (910 aa).

607–614 (GPNMAGKS) serves as a coordination point for ATP.

The protein belongs to the DNA mismatch repair MutS family.

This protein is involved in the repair of mismatches in DNA. It is possible that it carries out the mismatch recognition step. This protein has a weak ATPase activity. The protein is DNA mismatch repair protein MutS of Geobacillus thermodenitrificans (strain NG80-2).